We begin with the raw amino-acid sequence, 116 residues long: NADPH-dependent 7-cyano-7-deazaguanine reductase (116 aa).

The Thioimide intermediate role is filled by cysteine 31. Aspartate 38 (proton donor) is an active-site residue. Substrate-binding positions include 53–55 and 72–73; these read VEL and YE.

This sequence belongs to the GTP cyclohydrolase I family. QueF type 1 subfamily.

It localises to the cytoplasm. It carries out the reaction 7-aminomethyl-7-carbaguanine + 2 NADP(+) = 7-cyano-7-deazaguanine + 2 NADPH + 3 H(+). It functions in the pathway tRNA modification; tRNA-queuosine biosynthesis. In terms of biological role, catalyzes the NADPH-dependent reduction of 7-cyano-7-deazaguanine (preQ0) to 7-aminomethyl-7-deazaguanine (preQ1). In Chlorobium phaeobacteroides (strain DSM 266 / SMG 266 / 2430), this protein is NADPH-dependent 7-cyano-7-deazaguanine reductase.